The sequence spans 235 residues: RING-H2 finger protein ATL33 (235 aa).

Residues 64-84 (LIFVVIAFVAVPALVYALFFN) form a helical membrane-spanning segment. A disordered region spans residues 87 to 133 (CSSSRRNSSSSRTSSSSDDTPHATVDTPPITETTVTSESGGKFHKDT). Low complexity predominate over residues 88–103 (SSSRRNSSSSRTSSSS). Over residues 116 to 125 (ITETTVTSES) the composition is skewed to polar residues. The segment at 142 to 184 (CSVCLMVFTDSDELRQLSECKHAFHVLCIETWLKDHPNCPICR) adopts an RING-type; atypical zinc-finger fold. Positions 201–216 (NVNGNVNRSGGNRRVS) are enriched in low complexity. The interval 201-235 (NVNGNVNRSGGNRRVSATSRDDDWRQGLPDASSLV) is disordered.

It belongs to the RING-type zinc finger family. ATL subfamily.

Its subcellular location is the membrane. It catalyses the reaction S-ubiquitinyl-[E2 ubiquitin-conjugating enzyme]-L-cysteine + [acceptor protein]-L-lysine = [E2 ubiquitin-conjugating enzyme]-L-cysteine + N(6)-ubiquitinyl-[acceptor protein]-L-lysine.. Its pathway is protein modification; protein ubiquitination. This chain is RING-H2 finger protein ATL33 (ATL33), found in Arabidopsis thaliana (Mouse-ear cress).